The sequence spans 182 residues: Alkyl hydroperoxide reductase AhpD (182 aa).

The active-site Proton donor is cysteine 132. Cysteine 132 and cysteine 135 form a disulfide bridge. Cysteine 135 serves as the catalytic Cysteine sulfenic acid (-SOH) intermediate.

It belongs to the AhpD family.

It catalyses the reaction N(6)-[(R)-dihydrolipoyl]-L-lysyl-[lipoyl-carrier protein] + a hydroperoxide = N(6)-[(R)-lipoyl]-L-lysyl-[lipoyl-carrier protein] + an alcohol + H2O. Its function is as follows. Antioxidant protein with alkyl hydroperoxidase activity. Required for the reduction of the AhpC active site cysteine residues and for the regeneration of the AhpC enzyme activity. This chain is Alkyl hydroperoxide reductase AhpD, found in Bradyrhizobium diazoefficiens (strain JCM 10833 / BCRC 13528 / IAM 13628 / NBRC 14792 / USDA 110).